A 386-amino-acid polypeptide reads, in one-letter code: Formate-dependent phosphoribosylglycinamide formyltransferase (386 aa).

N(1)-(5-phospho-beta-D-ribosyl)glycinamide-binding positions include 15-16 and glutamate 75; that span reads EL. Residues arginine 107, lysine 148, 153-158, 188-191, and glutamate 196 each bind ATP; these read SSGKGQ and EQFI. The ATP-grasp domain maps to 112 to 301; that stretch reads ALAAQQLNLQ…EFELHLRAIV (190 aa). Mg(2+) is bound by residues glutamate 260 and glutamate 272. N(1)-(5-phospho-beta-D-ribosyl)glycinamide-binding positions include aspartate 279, lysine 349, and 356–357; that span reads RR.

The protein belongs to the PurK/PurT family. Homodimer.

It catalyses the reaction N(1)-(5-phospho-beta-D-ribosyl)glycinamide + formate + ATP = N(2)-formyl-N(1)-(5-phospho-beta-D-ribosyl)glycinamide + ADP + phosphate + H(+). Its pathway is purine metabolism; IMP biosynthesis via de novo pathway; N(2)-formyl-N(1)-(5-phospho-D-ribosyl)glycinamide from N(1)-(5-phospho-D-ribosyl)glycinamide (formate route): step 1/1. Involved in the de novo purine biosynthesis. Catalyzes the transfer of formate to 5-phospho-ribosyl-glycinamide (GAR), producing 5-phospho-ribosyl-N-formylglycinamide (FGAR). Formate is provided by PurU via hydrolysis of 10-formyl-tetrahydrofolate. This is Formate-dependent phosphoribosylglycinamide formyltransferase from Francisella tularensis subsp. tularensis (strain WY96-3418).